The chain runs to 1079 residues: Adhesion G-protein coupled receptor F3 (1079 aa).

A signal peptide spans 1 to 25; sequence MVCSAAPLLLLATTLPLLGSPVAQA. Over 26 to 775 the chain is Extracellular; sequence SQPVSETGVR…EEPALALLTQ (750 aa). N-linked (GlcNAc...) asparagine glycosylation is found at Asn188, Asn264, Asn301, Asn382, Asn441, and Asn648. A GAIN-B domain is found at 599-765; that stretch reads HPFAFSLPNV…SVLMSPHTVP (167 aa). 2 cysteine pairs are disulfide-bonded: Cys715/Cys747 and Cys734/Cys749. The tract at residues 715-765 is GPS; the sequence is CVFWDHSLFQGRGGWSKEGCQAQVASASPTAQCLCQHLTAFSVLMSPHTVP. The chain crosses the membrane as a helical span at residues 776–796; that stretch reads VGLGASILALLVCLGVYWLVW. The Cytoplasmic portion of the chain corresponds to 797–811; that stretch reads RVVVRNKISYFRHAA. The helical transmembrane segment at 812 to 832 threads the bilayer; the sequence is LLNMVFCLLAADTCFLGAPFL. Over 833–851 the chain is Extracellular; the sequence is SPGPRSPLCLAAAFLCHFL. A helical membrane pass occupies residues 852–874; it reads YLATFFWMLAQALVLAHQLLFVF. The Cytoplasmic portion of the chain corresponds to 875–881; sequence HQLAKHR. The chain crosses the membrane as a helical span at residues 882 to 902; the sequence is VLPLMVLLGYLCPLGLAGVTL. Residues 903-928 lie on the Extracellular side of the membrane; sequence GLYLPQGQYLREGECWLDGKGGALYT. Residues 929-949 traverse the membrane as a helical segment; it reads FVGPVLAIIGVNGLVLAMAML. Residues 950 to 973 lie on the Cytoplasmic side of the membrane; that stretch reads KLLRPSLSEGPPAEKRQALLGVIK. The helical transmembrane segment at 974–994 threads the bilayer; the sequence is ALLILTPIFGLTWGLGLATLL. Topologically, residues 995-1002 are extracellular; it reads EEVSTVPH. The chain crosses the membrane as a helical span at residues 1003–1023; it reads YIFTILNTLQGVFILLFGCLM. Over 1024–1079 the chain is Cytoplasmic; the sequence is DRKIQEALRKRFCRAQAPSSTISLVSCCLQILSCASKSMSEGIPWPSSEDMGTARS.

It belongs to the G-protein coupled receptor 2 family. Adhesion G-protein coupled receptor (ADGR) subfamily. In terms of assembly, heterodimer of 2 chains generated by proteolytic processing; the large extracellular N-terminal fragment and the membrane-bound C-terminal fragment predominantly remain associated and non-covalently linked. Autoproteolytically processed at the GPS region of the GAIN-B domain; this cleavage modulates receptor activity.

Its subcellular location is the membrane. In terms of biological role, orphan receptor. The sequence is that of Adhesion G-protein coupled receptor F3 (ADGRF3) from Homo sapiens (Human).